A 257-amino-acid chain; its full sequence is Tryptophan synthase alpha chain (257 aa).

Active-site proton acceptor residues include E44 and D55.

Belongs to the TrpA family. Tetramer of two alpha and two beta chains.

The enzyme catalyses (1S,2R)-1-C-(indol-3-yl)glycerol 3-phosphate + L-serine = D-glyceraldehyde 3-phosphate + L-tryptophan + H2O. The protein operates within amino-acid biosynthesis; L-tryptophan biosynthesis; L-tryptophan from chorismate: step 5/5. In terms of biological role, the alpha subunit is responsible for the aldol cleavage of indoleglycerol phosphate to indole and glyceraldehyde 3-phosphate. The polypeptide is Tryptophan synthase alpha chain (Chlamydia caviae (strain ATCC VR-813 / DSM 19441 / 03DC25 / GPIC) (Chlamydophila caviae)).